The primary structure comprises 169 residues: Probable actin-related protein 2/3 complex subunit 4 (169 aa).

The protein belongs to the ARPC4 family. Component of the Arp2/3 complex, at least composed of arx-1, arx-2, arx-4 and arx-6.

Its subcellular location is the cytoplasm. It localises to the cytoskeleton. Functions as actin-binding component of the Arp2/3 complex which is involved in regulation of actin polymerization and together with an activating nucleation-promoting factor (NPF) mediates the formation of branched actin networks. Seems to contact the mother actin filament. Plays a role in time-dependent memory loss and the retention of conditioned behavior over time. This chain is Probable actin-related protein 2/3 complex subunit 4, found in Caenorhabditis elegans.